We begin with the raw amino-acid sequence, 95 residues long: Small ribosomal subunit protein bS18 (95 aa).

Belongs to the bacterial ribosomal protein bS18 family. Part of the 30S ribosomal subunit. Forms a tight heterodimer with protein bS6.

Its function is as follows. Binds as a heterodimer with protein bS6 to the central domain of the 16S rRNA, where it helps stabilize the platform of the 30S subunit. This chain is Small ribosomal subunit protein bS18, found in Rickettsia rickettsii (strain Sheila Smith).